The sequence spans 541 residues: Chlorophyllide a oxygenase, chloroplastic (541 aa).

Positions 114-151 (LAREFKSIGTLRKELAELQEELAKAHNQVHLSETRVSS) form a coiled coil. Polar residues predominate over residues 178–192 (AECTSLAPSTSSASR). Residues 178–208 (AECTSLAPSTSSASRVVNKKPPRRSLNVSGP) are disordered. A Rieske domain is found at 220–320 (WYPVAFSSDL…CFEQEGMVWI (101 aa)). Residues C261, H263, C280, and H283 each contribute to the [2Fe-2S] cluster site. The Fe cation site is built by D359, D363, H366, and H371.

As to expression, expressed in leaves and germinating seedlings, but not in sheaths and roots.

It localises to the plastid. It is found in the chloroplast membrane. The protein localises to the chloroplast thylakoid membrane. It carries out the reaction chlorophyllide a + 2 NADPH + 2 O2 + 2 H(+) = chlorophyllide b + 2 NADP(+) + 3 H2O. Its function is as follows. Catalyzes a two-step oxygenase reaction involved in the synthesis of chlorophyll b. Acts specifically on the non-esterified chlorophyllide a and not on chlorophyll a. This Oryza sativa subsp. japonica (Rice) protein is Chlorophyllide a oxygenase, chloroplastic (CAO).